The primary structure comprises 668 residues: tRNA 5-methylaminomethyl-2-thiouridine biosynthesis bifunctional protein MnmC (668 aa).

The tRNA (mnm(5)s(2)U34)-methyltransferase stretch occupies residues 1-245 (MKHYSIQPAN…KREMLCGVME (245 aa)). Residues 270-668 (IGGGIASALL…LLKGKAVKAG (399 aa)) are FAD-dependent cmnm(5)s(2)U34 oxidoreductase.

It in the N-terminal section; belongs to the methyltransferase superfamily. tRNA (mnm(5)s(2)U34)-methyltransferase family. The protein in the C-terminal section; belongs to the DAO family. FAD is required as a cofactor.

It localises to the cytoplasm. The enzyme catalyses 5-aminomethyl-2-thiouridine(34) in tRNA + S-adenosyl-L-methionine = 5-methylaminomethyl-2-thiouridine(34) in tRNA + S-adenosyl-L-homocysteine + H(+). Catalyzes the last two steps in the biosynthesis of 5-methylaminomethyl-2-thiouridine (mnm(5)s(2)U) at the wobble position (U34) in tRNA. Catalyzes the FAD-dependent demodification of cmnm(5)s(2)U34 to nm(5)s(2)U34, followed by the transfer of a methyl group from S-adenosyl-L-methionine to nm(5)s(2)U34, to form mnm(5)s(2)U34. The polypeptide is tRNA 5-methylaminomethyl-2-thiouridine biosynthesis bifunctional protein MnmC (Escherichia coli (strain K12 / DH10B)).